Consider the following 463-residue polypeptide: Asparagine--tRNA ligase (463 aa).

This sequence belongs to the class-II aminoacyl-tRNA synthetase family. As to quaternary structure, homodimer.

The protein resides in the cytoplasm. The catalysed reaction is tRNA(Asn) + L-asparagine + ATP = L-asparaginyl-tRNA(Asn) + AMP + diphosphate + H(+). The chain is Asparagine--tRNA ligase from Clostridium acetobutylicum (strain ATCC 824 / DSM 792 / JCM 1419 / IAM 19013 / LMG 5710 / NBRC 13948 / NRRL B-527 / VKM B-1787 / 2291 / W).